A 151-amino-acid polypeptide reads, in one-letter code: FUN14 domain-containing protein 1A (151 aa).

The YXXL motif lies at 14–17; sequence YEVL. Transmembrane regions (helical) follow at residues 44-64, 71-91, and 130-150; these read YSVA…GFLF, AATA…GGYI, and FVKK…LGLA.

This sequence belongs to the FUN14 family.

The protein resides in the mitochondrion outer membrane. Acts as an activator of hypoxia-induced mitophagy, an important mechanism for mitochondrial quality control. The polypeptide is FUN14 domain-containing protein 1A (fundc1-a) (Xenopus laevis (African clawed frog)).